The following is a 183-amino-acid chain: Proton-transporting V-type ATPase complex assembly regulator TMEM9 (183 aa).

Residues 1-20 form the signal peptide; the sequence is MKLLCLVAVVGCLLVPPAQA. N-linked (GlcNAc...) asparagine glycans are attached at residues N21, N38, and N47. Topologically, residues 21-89 are extracellular; it reads NKSSEDIRCK…YEERSTTTIK (69 aa). Residues 90–110 traverse the membrane as a helical segment; the sequence is VIIVIYLSVVGALLLYMAFLM. The Cytoplasmic portion of the chain corresponds to 111-183; it reads LVDPLIRKPD…TVFDRHKMLS (73 aa). At S144 the chain carries Phosphoserine.

This sequence belongs to the TMEM9 family. In terms of assembly, interacts with the v-ATPase accessory protein ATP6AP2 and with the v-ATPase complex subunit ATP6V0D1; these interactions lead to the assembly of the v-ATPase complex. N-glycosylated. As to expression, expressed in heart, lung, kidney, liver and intestines. Enriched in the hepatocytes around the central vein.

It is found in the lysosome membrane. It localises to the late endosome membrane. The protein resides in the endosome. Its subcellular location is the multivesicular body membrane. Functionally, transmembrane protein that binds to and facilitates the assembly of lysosomal proton-transporting V-type ATPase (v-ATPase), resulting in enhanced lysosomal acidification and trafficking. By bringing the v-ATPase accessory protein ATP6AP2 and the v-ATPase subunit ATP6V0D1 together, allows v-ATPase complex formation and activation. TMEM9-controlled vesicular acidification induces hyperactivation of Wnt/beta-catenin signaling, involved in development, tissue homeostasis and tissue regeneration, through lysosomal degradation of adenomatous polyposis coli/APC. In the liver, involved in hepatic regeneration. This Mus musculus (Mouse) protein is Proton-transporting V-type ATPase complex assembly regulator TMEM9.